The sequence spans 358 residues: Tyrosinase ustQ (358 aa).

A glycan (N-linked (GlcNAc...) asparagine) is linked at Asn-28. A helical membrane pass occupies residues 37–57; it reads FVPVYAGLTIISLITVTVSLV. Residues Asn-91 and Asn-109 are each glycosylated (N-linked (GlcNAc...) asparagine). Residues His-128 and His-137 each coordinate Cu cation. N-linked (GlcNAc...) asparagine glycans are attached at residues Asn-172 and Asn-214. Cu cation is bound by residues His-266, His-270, and His-292. Asn-321 and Asn-325 each carry an N-linked (GlcNAc...) asparagine glycan.

Belongs to the tyrosinase family. The cofactor is Cu(2+).

It is found in the membrane. The enzyme catalyses 2 L-dopa + O2 = 2 L-dopaquinone + 2 H2O. It carries out the reaction L-tyrosine + O2 = L-dopaquinone + H2O. Its pathway is mycotoxin biosynthesis. Functionally, tyrosinase; part of the gene cluster that mediates the biosynthesis of the secondary metabolite ustiloxin B, an antimitotic tetrapeptide. First, ustA is processed by the subtilisin-like endoprotease Kex2 that is outside the ustiloxin B gene cluster, at the C-terminal side of Arg-Lys, after transfer to Golgi apparatus through the endoplasmic reticulum (ER). Cleavage by KEX2 generates 16 peptides YAIG-I to YAIG-XVI. To process the precursor peptide further, at least two peptidases are necessary to cleave the N-terminal and C-terminal sides of the Tyr-Ala-Ile-Gly core peptide which serves as backbone for the synthesis of ustiloxin B, through cyclization and modification of the tyrosine with a non-protein coding amino acid, norvaline. One of the two peptidases must be the serine peptidase ustP; and the other pepdidase is probably ustH. Macrocyclization of the core peptide derived from ustA requires the tyrosinase ustQ, as well as the homologous oxidases ustYa and ustYb, and leads to the production of the first cyclization product N-desmethylustiloxin F. For the formation of N-desmethylustiloxin F, three oxidation steps are required, hydroxylation at the benzylic position, hydroxylation at either the aromatic ring of Tyr or beta-position of Ile, and oxidative cyclization. UstQ may catalyze the oxidation of a phenol moiety, whereas the ustYa and ustYb are most likely responsible for the remaining two-step oxidations. N-desmethylustiloxin F is then methylated by ustM to yield ustiloxin F which in turn substrate of the cytochrome P450 monooxygenase ustC which catalyzes the formation of S-deoxyustiloxin H. The flavoprotein monooxygenases ustF1 and ustF2 then participate in the modification of the side chain of S-deoxyustiloxin H, leading to the synthesis of an oxime intermediate, via ustiloxin H. Finally, carboxylative dehydration performed by the cysteine desulfurase-like protein ustD yields ustiloxin B. The sequence is that of Tyrosinase ustQ from Aspergillus flavus (strain ATCC 200026 / FGSC A1120 / IAM 13836 / NRRL 3357 / JCM 12722 / SRRC 167).